A 540-amino-acid chain; its full sequence is Phosphoenolpyruvate carboxykinase (ATP) (540 aa).

Arginine 65 is a binding site for substrate. The residue at position 87 (lysine 87) is an N6-acetyllysine. Residues tyrosine 207 and lysine 213 each coordinate substrate. ATP is bound by residues lysine 213, histidine 232, and 248-256 (GLSGTGKTT). The Mn(2+) site is built by lysine 213 and histidine 232. Residue aspartate 269 coordinates Mn(2+). ATP is bound by residues glutamate 297, arginine 333, 449–450 (RI), and threonine 455. Arginine 333 is a substrate binding site. N6-acetyllysine is present on lysine 523.

The protein belongs to the phosphoenolpyruvate carboxykinase (ATP) family. As to quaternary structure, monomer. The cofactor is Mn(2+).

It localises to the cytoplasm. It catalyses the reaction oxaloacetate + ATP = phosphoenolpyruvate + ADP + CO2. The protein operates within carbohydrate biosynthesis; gluconeogenesis. Involved in the gluconeogenesis. Catalyzes the conversion of oxaloacetate (OAA) to phosphoenolpyruvate (PEP) through direct phosphoryl transfer between the nucleoside triphosphate and OAA. This Shigella flexneri protein is Phosphoenolpyruvate carboxykinase (ATP).